A 312-amino-acid chain; its full sequence is Ribosomal protein L11 methyltransferase (312 aa).

S-adenosyl-L-methionine is bound by residues Thr162, Gly183, Asp205, and Asn248.

The protein belongs to the methyltransferase superfamily. PrmA family.

Its subcellular location is the cytoplasm. The catalysed reaction is L-lysyl-[protein] + 3 S-adenosyl-L-methionine = N(6),N(6),N(6)-trimethyl-L-lysyl-[protein] + 3 S-adenosyl-L-homocysteine + 3 H(+). Its function is as follows. Methylates ribosomal protein L11. The polypeptide is Ribosomal protein L11 methyltransferase (Bacillus cereus (strain ATCC 10987 / NRS 248)).